The chain runs to 297 residues: HTH-type transcriptional regulator AceR (297 aa).

The HTH lysR-type domain maps to 1-60; sequence MNINQEQLLMFQAVMETGSFSAAARKLGKVPSAVSMSIANLEIDLNLTLFERKGREPTPT. A DNA-binding region (H-T-H motif) is located at residues 20–39; it reads FSAAARKLGKVPSAVSMSIA.

This sequence belongs to the LysR transcriptional regulatory family. As to quaternary structure, homodimer and homotetramer. Binding of chlorhexidine at the inducer-binding domain causes a quaternary structural change that favors interactions between dimers to form tetramers.

The protein resides in the cytoplasm. In terms of biological role, regulates the expression of the AceI transporter. Binds DNA and chlorhexidine. Binds to regulatory sites within the intergenic region between the aceI and aceR genes, and affects the interaction between RNA polymerase (RNAP) and promoter DNA both in the presence and in the absence of chlorhexidine. In the absence of chlorhexidine, prevents transcription of the aceI gene by disrupting interactions between the promoter DNA and RNAP. In the presence of chlorhexidine, activates expression of aceI. When AceR interacts with chlorhexidine, it undergoes a conformational change and the tetrameric form either releases the DNA or shifts the position of the DNA-binding region to allow RNAP to bind onto the promoter DNA to proceed with aceI transcription. This is HTH-type transcriptional regulator AceR from Acinetobacter baumannii (strain ATCC 17978 / DSM 105126 / CIP 53.77 / LMG 1025 / NCDC KC755 / 5377).